Here is a 173-residue protein sequence, read N- to C-terminus: Large ribosomal subunit protein uL15 (173 aa).

Basic and acidic residues predominate over residues 1–11; it reads MKLNEIRDNQG. The interval 1 to 50 is disordered; it reads MKLNEIRDNQGARKSRVRVGRGIGSGLGKTGGRGQKGQKSRSGVSINGFE. Positions 21–35 are enriched in gly residues; that stretch reads RGIGSGLGKTGGRGQ.

It belongs to the universal ribosomal protein uL15 family. In terms of assembly, part of the 50S ribosomal subunit.

Its function is as follows. Binds to the 23S rRNA. The chain is Large ribosomal subunit protein uL15 from Rhizorhabdus wittichii (strain DSM 6014 / CCUG 31198 / JCM 15750 / NBRC 105917 / EY 4224 / RW1) (Sphingomonas wittichii).